Reading from the N-terminus, the 462-residue chain is L-seryl-tRNA(Sec) selenium transferase (462 aa).

Position 294 is an N6-(pyridoxal phosphate)lysine (Lys294).

It belongs to the SelA family. As to quaternary structure, homodecamer; pentamer of dimers. Binds only one seryl-tRNA(Sec) per dimer. Pyridoxal 5'-phosphate is required as a cofactor.

It is found in the cytoplasm. The catalysed reaction is L-seryl-tRNA(Sec) + selenophosphate + H(+) = L-selenocysteinyl-tRNA(Sec) + phosphate. The protein operates within aminoacyl-tRNA biosynthesis; selenocysteinyl-tRNA(Sec) biosynthesis; selenocysteinyl-tRNA(Sec) from L-seryl-tRNA(Sec) (bacterial route): step 1/1. Functionally, converts seryl-tRNA(Sec) to selenocysteinyl-tRNA(Sec) required for selenoprotein biosynthesis. The polypeptide is L-seryl-tRNA(Sec) selenium transferase (Yersinia enterocolitica serotype O:8 / biotype 1B (strain NCTC 13174 / 8081)).